A 264-amino-acid chain; its full sequence is Thymidylate synthase (264 aa).

Arg21 is a binding site for dUMP. Position 51 (His51) interacts with (6R)-5,10-methylene-5,6,7,8-tetrahydrofolate. 126-127 (RR) lines the dUMP pocket. Cys146 (nucleophile) is an active-site residue. Residues 166–169 (RSAD), Asn177, and 207–209 (HIY) contribute to the dUMP site. Residue Asp169 coordinates (6R)-5,10-methylene-5,6,7,8-tetrahydrofolate. Ala263 contributes to the (6R)-5,10-methylene-5,6,7,8-tetrahydrofolate binding site.

It belongs to the thymidylate synthase family. Bacterial-type ThyA subfamily. Homodimer.

It localises to the cytoplasm. It catalyses the reaction dUMP + (6R)-5,10-methylene-5,6,7,8-tetrahydrofolate = 7,8-dihydrofolate + dTMP. Its pathway is pyrimidine metabolism; dTTP biosynthesis. In terms of biological role, catalyzes the reductive methylation of 2'-deoxyuridine-5'-monophosphate (dUMP) to 2'-deoxythymidine-5'-monophosphate (dTMP) while utilizing 5,10-methylenetetrahydrofolate (mTHF) as the methyl donor and reductant in the reaction, yielding dihydrofolate (DHF) as a by-product. This enzymatic reaction provides an intracellular de novo source of dTMP, an essential precursor for DNA biosynthesis. The sequence is that of Thymidylate synthase from Methylobacillus flagellatus (strain ATCC 51484 / DSM 6875 / VKM B-1610 / KT).